A 282-amino-acid polypeptide reads, in one-letter code: MSIKFWMNKEGRKPANTKRKAYLFTLGSFVTMFFVLCISPVFSGATYKFEEMKIGEYQSLSSTVKIAVAKKEYNPDNQTLRIDYELRADNDSQILSNMKYKVENKYIKQKDNNVKTKVYRASDNYIVVISENVPEEFGVVSSVVKPEYIHPELQNDVDDLKERSMKMYVLENEKLINRELKKKSKDFYEREYLAFSQQALRKEIEKKMEDKSSAMKQLKIKNEQLTKEMEYQTEGEKVKTKNTINSNESTINNHQKEIDVLKEDIKMKEKKIQLLDEKKKTI.

Residues 22–42 form a helical membrane-spanning segment; sequence YLFTLGSFVTMFFVLCISPVF.

Its subcellular location is the cell membrane. This is an uncharacterized protein from Bacillus anthracis.